The primary structure comprises 434 residues: Eukaryotic translation initiation factor 3 subunit E (434 aa).

The 174-residue stretch at 219-392 folds into the PCI domain; that stretch reads FFNHPKGRDL…GHVVMGTQPL (174 aa).

This sequence belongs to the eIF-3 subunit E family. As to quaternary structure, component of the eukaryotic translation initiation factor 3 (eIF-3) complex. The eIF-3 complex interacts with pix. Interacts with mxt.

Its subcellular location is the cytoplasm. Functionally, component of the eukaryotic translation initiation factor 3 (eIF-3) complex, which is involved in protein synthesis of a specialized repertoire of mRNAs and, together with other initiation factors, stimulates binding of mRNA and methionyl-tRNAi to the 40S ribosome. The eIF-3 complex specifically targets and initiates translation of a subset of mRNAs involved in cell proliferation. The chain is Eukaryotic translation initiation factor 3 subunit E (eIF3-S6) from Drosophila pseudoobscura pseudoobscura (Fruit fly).